Here is a 647-residue protein sequence, read N- to C-terminus: Transcriptional repressor XBP1 (647 aa).

Polar residues-rich tracts occupy residues serine 138–threonine 148 and serine 156–asparagine 170. 2 disordered regions span residues serine 138–asparagine 170 and leucine 264–serine 295. Over residues leucine 264–threonine 282 the composition is skewed to low complexity. The HTH APSES-type domain occupies threonine 282–tryptophan 395. The H-T-H motif DNA-binding region spans cysteine 318–leucine 339. Low complexity predominate over residues threonine 425 to arginine 434. Disordered stretches follow at residues threonine 425–alanine 455, lysine 485–aspartate 508, and glutamine 612–glutamine 647. A compositionally biased stretch (basic residues) spans proline 435–glutamine 445. The segment covering serine 493–serine 502 has biased composition (low complexity).

Its subcellular location is the nucleus. In terms of biological role, transcriptional repressor which binds to the consensus sequence 5'-GCCTCGA[G/A]G[C/A]-3'. Represses CLN1 transcription. The sequence is that of Transcriptional repressor XBP1 (XBP1) from Saccharomyces cerevisiae (strain ATCC 204508 / S288c) (Baker's yeast).